Reading from the N-terminus, the 255-residue chain is Segregation and condensation protein A (255 aa).

Belongs to the ScpA family. As to quaternary structure, component of a cohesin-like complex composed of ScpA, ScpB and the Smc homodimer, in which ScpA and ScpB bind to the head domain of Smc. The presence of the three proteins is required for the association of the complex with DNA.

The protein localises to the cytoplasm. Functionally, participates in chromosomal partition during cell division. May act via the formation of a condensin-like complex containing Smc and ScpB that pull DNA away from mid-cell into both cell halves. The chain is Segregation and condensation protein A from Lactiplantibacillus plantarum (strain ATCC BAA-793 / NCIMB 8826 / WCFS1) (Lactobacillus plantarum).